Reading from the N-terminus, the 123-residue chain is MATINQLVRQPRKRSVEKSDVPALQNCPQRRGVCTRVYTTTPRKPNSALRKVCRVRLTNGFEVSSYIGGEGHNLQEHSVVLIRGGRVKDLPGVRYHTVRGSLDTSGVKGRNQGRSKYGTKRPK.

The segment at 1 to 22 is disordered; the sequence is MATINQLVRQPRKRSVEKSDVP. Asp89 carries the post-translational modification 3-methylthioaspartic acid. A disordered region spans residues 100-123; sequence GSLDTSGVKGRNQGRSKYGTKRPK. Residues 111-123 are compositionally biased toward basic residues; that stretch reads NQGRSKYGTKRPK.

It belongs to the universal ribosomal protein uS12 family. As to quaternary structure, part of the 30S ribosomal subunit. Contacts proteins S8 and S17. May interact with IF1 in the 30S initiation complex.

With S4 and S5 plays an important role in translational accuracy. In terms of biological role, interacts with and stabilizes bases of the 16S rRNA that are involved in tRNA selection in the A site and with the mRNA backbone. Located at the interface of the 30S and 50S subunits, it traverses the body of the 30S subunit contacting proteins on the other side and probably holding the rRNA structure together. The combined cluster of proteins S8, S12 and S17 appears to hold together the shoulder and platform of the 30S subunit. The sequence is that of Small ribosomal subunit protein uS12 from Pseudomonas putida (strain GB-1).